A 282-amino-acid chain; its full sequence is ATP phosphoribosyltransferase (282 aa).

The protein belongs to the ATP phosphoribosyltransferase family. Long subfamily. Mg(2+) is required as a cofactor.

It is found in the cytoplasm. It carries out the reaction 1-(5-phospho-beta-D-ribosyl)-ATP + diphosphate = 5-phospho-alpha-D-ribose 1-diphosphate + ATP. The protein operates within amino-acid biosynthesis; L-histidine biosynthesis; L-histidine from 5-phospho-alpha-D-ribose 1-diphosphate: step 1/9. Its activity is regulated as follows. Feedback inhibited by histidine. In terms of biological role, catalyzes the condensation of ATP and 5-phosphoribose 1-diphosphate to form N'-(5'-phosphoribosyl)-ATP (PR-ATP). Has a crucial role in the pathway because the rate of histidine biosynthesis seems to be controlled primarily by regulation of HisG enzymatic activity. This Pyrobaculum aerophilum (strain ATCC 51768 / DSM 7523 / JCM 9630 / CIP 104966 / NBRC 100827 / IM2) protein is ATP phosphoribosyltransferase.